A 995-amino-acid polypeptide reads, in one-letter code: KN motif and ankyrin repeat domain-containing protein 4 (995 aa).

2 disordered regions span residues 1–29 (MEKTDAKDQSSQGDEEKDPPKSHPYSVET) and 68–127 (TLPR…EVSY). The segment covering 101 to 124 (LGTQEQNQSPPLGNAPQASTSRSE) has biased composition (polar residues). The stretch at 343 to 404 (SSLKQQVSAL…EGQFHQENAK (62 aa)) forms a coiled coil. 5 disordered regions span residues 443 to 467 (ESWGHRGEENGLLWGPDGHKQGNQS), 503 to 558 (EAGT…PTDA), 617 to 642 (QAHPPKEPPASSSSPPVEISPSTSLK), 663 to 705 (LQFV…PDHK), and 721 to 740 (PEGTCHAAQESGPGEEVPHS). Positions 511 to 523 (GPQGGTRGAGGFL) are enriched in gly residues. Residues 526-549 (SDRKTPPAGREETSSNLPGKEHPG) show a composition bias toward basic and acidic residues. A compositionally biased stretch (low complexity) spans 625–640 (PASSSSPPVEISPSTS). The segment covering 680 to 693 (TSGEDSTPEDLSDS) has biased composition (acidic residues). Residues 694 to 705 (EAEKKCDGPDHK) show a composition bias toward basic and acidic residues. 5 ANK repeats span residues 823 to 853 (NGNTALHYSVSHSNFSIVKLLLETGVCNVDH), 862 to 890 (VMITPLASAETNEDMAVVWKLLREGNVNI), 895 to 924 (GGQTALMLGVSHDREDMVQALLSCQADVNL), 928 to 958 (DGSSALMVACHHGNVDLVRLLLAHPACDSSL), and 962 to 992 (AGRTALSIALKSPTHMEIAGLLRAHAEQGRS).

As to expression, strongly expressed in colon, liver, lung, skeletal muscle and kidney.

It is found in the cytoplasm. May be involved in the control of cytoskeleton formation by regulating actin polymerization. The chain is KN motif and ankyrin repeat domain-containing protein 4 (KANK4) from Homo sapiens (Human).